A 147-amino-acid chain; its full sequence is Hemoglobin subunit epsilon (147 aa).

The Globin domain occupies 3 to 147 (HFTAEEKAII…VATALAHKYH (145 aa)). A phosphoserine mark is found at S14 and S51. Heme b-binding residues include H64 and H93.

It belongs to the globin family. As to quaternary structure, heterotetramer of two alpha chains and two epsilon chains in early embryonic hemoglobin Gower-2; two zeta chains and two epsilon chains in early embryonic hemoglobin Gower-1. Red blood cells.

Its function is as follows. The epsilon chain is a beta-type chain of early mammalian embryonic hemoglobin. In Otolemur crassicaudatus (Brown greater galago), this protein is Hemoglobin subunit epsilon (HBE1).